The primary structure comprises 458 residues: Secretion-regulating guanine nucleotide exchange factor (458 aa).

RCC1 repeat units lie at residues 15-67 (AALF…VTDG), 68-119 (GDLF…LTEN), 120-171 (GQVL…ATAS), 172-230 (GIVF…LTDA), 231-283 (GEVY…QTET), 284-351 (GKMF…IIGG), and 352-402 (VCYS…LCQL). The disordered stretch occupies residues 420-458 (DAIEDTESQKAMDKERNWKERQSETSTQSQSDWSRNGGL). Over residues 426-442 (ESQKAMDKERNWKERQS) the composition is skewed to basic and acidic residues. Residue S427 is modified to Phosphoserine.

Interacts with SEC5. The interaction occurs only in the presence of magnesium or manganese and is stimulated by dCTP or GTP.

It is found in the cytoplasm. The protein localises to the nucleus. In terms of biological role, probable guanine nucleotide exchange factor (GEF), which may be involved in the secretion process. This is Secretion-regulating guanine nucleotide exchange factor (SERGEF) from Homo sapiens (Human).